We begin with the raw amino-acid sequence, 279 residues long: Large ribosomal subunit protein uL2 (279 aa).

Disordered regions lie at residues 1–59 and 224–279; these read MGIR…GGHK and VAMN…KNKR. Positions 50-59 are enriched in basic residues; the sequence is TTRHKGGGHK. A compositionally biased stretch (basic and acidic residues) spans 253-268; that stretch reads REGRTRRPNKESDKLI. Residues 269–279 are compositionally biased toward basic residues; sequence VRRRRTGKNKR.

Belongs to the universal ribosomal protein uL2 family. As to quaternary structure, part of the 50S ribosomal subunit. Forms a bridge to the 30S subunit in the 70S ribosome.

One of the primary rRNA binding proteins. Required for association of the 30S and 50S subunits to form the 70S ribosome, for tRNA binding and peptide bond formation. It has been suggested to have peptidyltransferase activity; this is somewhat controversial. Makes several contacts with the 16S rRNA in the 70S ribosome. The chain is Large ribosomal subunit protein uL2 from Pseudarthrobacter chlorophenolicus (strain ATCC 700700 / DSM 12829 / CIP 107037 / JCM 12360 / KCTC 9906 / NCIMB 13794 / A6) (Arthrobacter chlorophenolicus).